Consider the following 415-residue polypeptide: Serine hydroxymethyltransferase (415 aa).

Residues Leu-117 and 121-123 (GHL) contribute to the (6S)-5,6,7,8-tetrahydrofolate site. Lys-226 carries the post-translational modification N6-(pyridoxal phosphate)lysine. (6S)-5,6,7,8-tetrahydrofolate is bound by residues Glu-241 and 349–351 (SPF).

This sequence belongs to the SHMT family. In terms of assembly, homodimer. Pyridoxal 5'-phosphate serves as cofactor.

The protein resides in the cytoplasm. The enzyme catalyses (6R)-5,10-methylene-5,6,7,8-tetrahydrofolate + glycine + H2O = (6S)-5,6,7,8-tetrahydrofolate + L-serine. Its pathway is one-carbon metabolism; tetrahydrofolate interconversion. The protein operates within amino-acid biosynthesis; glycine biosynthesis; glycine from L-serine: step 1/1. Its function is as follows. Catalyzes the reversible interconversion of serine and glycine with tetrahydrofolate (THF) serving as the one-carbon carrier. This reaction serves as the major source of one-carbon groups required for the biosynthesis of purines, thymidylate, methionine, and other important biomolecules. Also exhibits THF-independent aldolase activity toward beta-hydroxyamino acids, producing glycine and aldehydes, via a retro-aldol mechanism. The protein is Serine hydroxymethyltransferase of Geotalea daltonii (strain DSM 22248 / JCM 15807 / FRC-32) (Geobacter daltonii).